The chain runs to 179 residues: DELTA-actitoxin-Afr1c (179 aa).

The N-terminal alpha-helix that contributes to the pore stretch occupies residues 1 to 29; it reads SAEVAGAIIDGASLTFDVLQTVLKALGDV. The tract at residues 11-30 is N-terminal region; that stretch reads GASLTFDVLQTVLKALGDVS. An an N-(acyl)-sphingosylphosphocholine-binding site is contributed by R31. N-acetyl-D-glucosamine 6-sulfate-binding residues include Y51 and R53. An N-(acyl)-sphingosylphosphocholine-binding residues include R53, S54, R79, G85, Y113, S114, W116, Y133, Y137, Y138, R144, and G168. The interval 105–120 is trp-rich region, which is important for the binding to lipid membrane; the sequence is SIPFDYNLYSNWWNVK. Y138 lines the N-acetyl-D-glucosamine 6-sulfate pocket. Residues 144–146 carry the Cell attachment site, crucial for protein stability motif; that stretch reads RGD.

The protein belongs to the actinoporin family. Sea anemone subfamily. Octamer or nonamer in membranes. Monomer in the soluble state.

The protein localises to the secreted. The protein resides in the nematocyst. It is found in the target cell membrane. Pore-forming toxin (PFT) that consists of a crown-shaped octamer or nonamer that forms cation-selective hydrophilic pores of about 1.5 nm (inside) and 13 nm (outside) and causes cytolysis. It causes cardiac stimulation. Also causes hemolysis (HC(50)=0.3 nM). Interestingly, the Phe-16 is crucial for hemolysis. Pore formation is a multi-step process that involves specific recognition of membrane sphingomyelin (but neither cholesterol nor phosphatidylcholine) using aromatic rich region and adjacent phosphocholine (POC) binding site, firm binding to the membrane (mainly driven by hydrophobic interactions) accompanied by the transfer of the N-terminal region to the lipid-water interface and finally pore formation after oligomerization of monomers. It is probable that a dimeric form is an assembly intermediate before the complete oligomerization. The formation of stable pores occurs only in vesicles composed of DOPC/SM (there is no oligomerization when the PFT is treated with vesicles of DOPC or SM alone). The transmembrane pore displays 8 lateral perforations, one at each subunit-subunit interface, partially occupied by the acyl-chain region of a bridging lipid. Each pore contains 24 lipid molecules, firmly bound to each subunit, that is, 3 lipids (L1, L2, L3, L4 and/or L5) are associated to each subunit. Lipid L1 bridges 2 subunits, whereas lipids L2 and L3 bind to sites at single subunit. This is DELTA-actitoxin-Afr1c from Actinia fragacea (Strawberry anemone).